The following is a 301-amino-acid chain: Cell division control protein 2 homolog 1 (301 aa).

In terms of domain architecture, Protein kinase spans 5–297; that stretch reads YERLQKIGEG…AAQALEHPYF (293 aa). ATP contacts are provided by residues 11–19 and K34; that span reads IGEGSYGVV. S15 carries the phosphoserine modification. Y16 carries the post-translational modification Phosphotyrosine. Catalysis depends on D127, which acts as the Proton acceptor. T160 is subject to Phosphothreonine; by CAK.

It belongs to the protein kinase superfamily. CMGC Ser/Thr protein kinase family. CDC2/CDKX subfamily. In terms of assembly, forms a stable but non-covalent complex with a regulatory subunit and with a cyclin.

The catalysed reaction is L-seryl-[protein] + ATP = O-phospho-L-seryl-[protein] + ADP + H(+). The enzyme catalyses L-threonyl-[protein] + ATP = O-phospho-L-threonyl-[protein] + ADP + H(+). With respect to regulation, phosphorylation at Ser-15 or Tyr-16 inactivates the enzyme, while phosphorylation at Thr-160 activates it. Functionally, probably involved in the control of the cell cycle. The chain is Cell division control protein 2 homolog 1 (CRK1) from Trypanosoma brucei brucei.